Here is a 383-residue protein sequence, read N- to C-terminus: Meiotic recombination protein SPO11-2 (383 aa).

Positions 24–167 (LLPHEARARI…LGIMASSRGL (144 aa)) constitute a Topo IIA-type catalytic domain. The active-site O-(5'-phospho-DNA)-tyrosine intermediate is Tyr124. Mg(2+) contacts are provided by Glu217 and Asp270.

The protein belongs to the TOP6A family. In terms of assembly, heterotetramer of 2 SPO11 (SPO11-1 and/or SPO11-2) and 2 MTOPVIB chains. Interacts with MTOPVIB. May form a heterodimer with SPO11-1. Interacts with PRD1. Does not interact with TOP6B. Requires Mg(2+) as cofactor. In terms of tissue distribution, very low expression in flowers and shoots.

It localises to the nucleus. It carries out the reaction ATP-dependent breakage, passage and rejoining of double-stranded DNA.. Its function is as follows. Component of a topoisomerase 6 complex specifically required for meiotic recombination. Together with MTOPVIB, mediates DNA cleavage that forms the double-strand breaks (DSB) that initiate meiotic recombination. The complex promotes relaxation of negative and positive supercoiled DNA and DNA decatenation through cleavage and ligation cycles. The protein is Meiotic recombination protein SPO11-2 (SPO11-2) of Arabidopsis thaliana (Mouse-ear cress).